A 307-amino-acid polypeptide reads, in one-letter code: UDP-3-O-acyl-N-acetylglucosamine deacetylase (307 aa).

The Zn(2+) site is built by His78, His241, and Asp245. His268 acts as the Proton donor in catalysis.

The protein belongs to the LpxC family. Requires Zn(2+) as cofactor.

The catalysed reaction is a UDP-3-O-[(3R)-3-hydroxyacyl]-N-acetyl-alpha-D-glucosamine + H2O = a UDP-3-O-[(3R)-3-hydroxyacyl]-alpha-D-glucosamine + acetate. It functions in the pathway glycolipid biosynthesis; lipid IV(A) biosynthesis; lipid IV(A) from (3R)-3-hydroxytetradecanoyl-[acyl-carrier-protein] and UDP-N-acetyl-alpha-D-glucosamine: step 2/6. Catalyzes the hydrolysis of UDP-3-O-myristoyl-N-acetylglucosamine to form UDP-3-O-myristoylglucosamine and acetate, the committed step in lipid A biosynthesis. The chain is UDP-3-O-acyl-N-acetylglucosamine deacetylase from Variovorax paradoxus (strain S110).